The following is a 405-amino-acid chain: Imidazolonepropionase (405 aa).

Residues His73 and His75 each contribute to the Fe(3+) site. The Zn(2+) site is built by His73 and His75. 4-imidazolone-5-propanoate-binding residues include Arg82, Tyr145, and His178. Tyr145 serves as a coordination point for N-formimidoyl-L-glutamate. Residue His243 participates in Fe(3+) binding. His243 is a binding site for Zn(2+). Gln246 serves as a coordination point for 4-imidazolone-5-propanoate. Fe(3+) is bound at residue Asp318. Asp318 lines the Zn(2+) pocket. Asn320 and Gly322 together coordinate N-formimidoyl-L-glutamate. 4-imidazolone-5-propanoate is bound at residue Thr323.

It belongs to the metallo-dependent hydrolases superfamily. HutI family. The cofactor is Zn(2+). Fe(3+) serves as cofactor.

It is found in the cytoplasm. It catalyses the reaction 4-imidazolone-5-propanoate + H2O = N-formimidoyl-L-glutamate. Its pathway is amino-acid degradation; L-histidine degradation into L-glutamate; N-formimidoyl-L-glutamate from L-histidine: step 3/3. In terms of biological role, catalyzes the hydrolytic cleavage of the carbon-nitrogen bond in imidazolone-5-propanoate to yield N-formimidoyl-L-glutamate. It is the third step in the universal histidine degradation pathway. The polypeptide is Imidazolonepropionase (Brucella abortus (strain S19)).